Reading from the N-terminus, the 451-residue chain is Adenylyltransferase and sulfurtransferase MOCS3-1 (451 aa).

A disordered region spans residues glycine 42–leucine 62. Positions glutamate 43–serine 52 are enriched in acidic residues. A Phosphothreonine modification is found at threonine 60. ATP is bound by residues glycine 99, aspartate 120, serine 127–arginine 131, lysine 144, and aspartate 188–asparagine 189. Residues cysteine 229 and cysteine 232 each contribute to the Zn(2+) site. The active-site Glycyl thioester intermediate; for adenylyltransferase activity is the cysteine 246. 2 residues coordinate Zn(2+): cysteine 304 and cysteine 307. The region spanning glutamine 353–proline 449 is the Rhodanese domain. Cysteine 408 (cysteine persulfide intermediate; for sulfurtransferase activity) is an active-site residue.

In the N-terminal section; belongs to the HesA/MoeB/ThiF family. UBA4 subfamily. The cofactor is Zn(2+).

The protein resides in the cytoplasm. The catalysed reaction is [molybdopterin-synthase sulfur-carrier protein]-C-terminal Gly-Gly + ATP + H(+) = [molybdopterin-synthase sulfur-carrier protein]-C-terminal Gly-Gly-AMP + diphosphate. The enzyme catalyses [molybdopterin-synthase sulfur-carrier protein]-C-terminal Gly-Gly-AMP + S-sulfanyl-L-cysteinyl-[cysteine desulfurase] + AH2 = [molybdopterin-synthase sulfur-carrier protein]-C-terminal-Gly-aminoethanethioate + L-cysteinyl-[cysteine desulfurase] + A + AMP + 2 H(+). Its pathway is tRNA modification; 5-methoxycarbonylmethyl-2-thiouridine-tRNA biosynthesis. It participates in cofactor biosynthesis; molybdopterin biosynthesis. Plays a central role in 2-thiolation of mcm(5)S(2)U at tRNA wobble positions of cytosolic tRNA(Lys), tRNA(Glu) and tRNA(Gln). Also essential during biosynthesis of the molybdenum cofactor. Acts by mediating the C-terminal thiocarboxylation of sulfur carriers URM1 and MOCS2A. Its N-terminus first activates URM1 and MOCS2A as acyl-adenylates (-COAMP), then the persulfide sulfur on the catalytic cysteine is transferred to URM1 and MOCS2A to form thiocarboxylation (-COSH) of their C-terminus. The reaction probably involves hydrogen sulfide that is generated from the persulfide intermediate and that acts as a nucleophile towards URM1 and MOCS2A. Subsequently, a transient disulfide bond is formed. Does not use thiosulfate as sulfur donor; NFS1 probably acting as a sulfur donor for thiocarboxylation reactions. This chain is Adenylyltransferase and sulfurtransferase MOCS3-1, found in Drosophila pseudoobscura pseudoobscura (Fruit fly).